A 309-amino-acid chain; its full sequence is NAD kinase (309 aa).

Catalysis depends on Asp-89, which acts as the Proton acceptor. NAD(+) is bound by residues 89–90, 163–164, His-174, Arg-191, Asp-193, and 204–209; these read DG, NE, and TAYALS.

It belongs to the NAD kinase family. Requires a divalent metal cation as cofactor.

The protein localises to the cytoplasm. The catalysed reaction is NAD(+) + ATP = ADP + NADP(+) + H(+). Its function is as follows. Involved in the regulation of the intracellular balance of NAD and NADP, and is a key enzyme in the biosynthesis of NADP. Catalyzes specifically the phosphorylation on 2'-hydroxyl of the adenosine moiety of NAD to yield NADP. The polypeptide is NAD kinase (Shewanella baltica (strain OS155 / ATCC BAA-1091)).